The sequence spans 494 residues: Cytochrome P450 2A6 (494 aa).

The substrate site is built by F107 and N297. A heme-binding site is contributed by C439.

Belongs to the cytochrome P450 family. Heme is required as a cofactor. In terms of tissue distribution, liver.

It is found in the endoplasmic reticulum membrane. The protein localises to the microsome membrane. It carries out the reaction 1,4-cineole + reduced [NADPH--hemoprotein reductase] + O2 = 2-exo-hydroxy-1,4-cineole + oxidized [NADPH--hemoprotein reductase] + H2O + H(+). Exhibits a high coumarin 7-hydroxylase activity. Can act in the hydroxylation of the anti-cancer drugs cyclophosphamide and ifosphamide. Competent in the metabolic activation of aflatoxin B1. Constitutes the major nicotine C-oxidase. Acts as a 1,4-cineole 2-exo-monooxygenase. Possesses low phenacetin O-deethylation activity. This is Cytochrome P450 2A6 (CYP2A6) from Homo sapiens (Human).